A 183-amino-acid polypeptide reads, in one-letter code: Tail fiber assembly protein (183 aa).

This sequence belongs to the tfa family.

Its function is as follows. Chaperone involved, together with gp57, in the assembly of the distal-half tail fiber of T4. It is necessary for the maturation of protein gp37 to the dimeric structural subunit P37. This Escherichia coli (Bacteriophage T4) protein is Tail fiber assembly protein (38).